An 889-amino-acid polypeptide reads, in one-letter code: DNA gyrase subunit A (889 aa).

The region spanning 35 to 501 (LPDVRDGLKP…GFEDLEDEDL (467 aa)) is the Topo IIA-type catalytic domain. Tyr123 (O-(5'-phospho-DNA)-tyrosine intermediate) is an active-site residue. A GyrA-box motif is present at residues 528–534 (QNRGGRG). The tract at residues 811–889 (KEDAEDETNE…IQQSLDEDEE (79 aa)) is disordered. Positions 813 to 823 (DAEDETNEDEQ) are enriched in acidic residues. Basic and acidic residues predominate over residues 863–875 (DGRIEVRQDFMDR). Residues 876–889 (VEEDIQQSLDEDEE) are compositionally biased toward acidic residues.

It belongs to the type II topoisomerase GyrA/ParC subunit family. Heterotetramer, composed of two GyrA and two GyrB chains. In the heterotetramer, GyrA contains the active site tyrosine that forms a transient covalent intermediate with DNA, while GyrB binds cofactors and catalyzes ATP hydrolysis.

It localises to the cytoplasm. The catalysed reaction is ATP-dependent breakage, passage and rejoining of double-stranded DNA.. Functionally, a type II topoisomerase that negatively supercoils closed circular double-stranded (ds) DNA in an ATP-dependent manner to modulate DNA topology and maintain chromosomes in an underwound state. Negative supercoiling favors strand separation, and DNA replication, transcription, recombination and repair, all of which involve strand separation. Also able to catalyze the interconversion of other topological isomers of dsDNA rings, including catenanes and knotted rings. Type II topoisomerases break and join 2 DNA strands simultaneously in an ATP-dependent manner. The polypeptide is DNA gyrase subunit A (Staphylococcus aureus).